Reading from the N-terminus, the 317-residue chain is ATP synthase gamma chain (317 aa).

It belongs to the ATPase gamma chain family. As to quaternary structure, F-type ATPases have 2 components, CF(1) - the catalytic core - and CF(0) - the membrane proton channel. CF(1) has five subunits: alpha(3), beta(3), gamma(1), delta(1), epsilon(1). CF(0) has three main subunits: a, b and c.

The protein localises to the cellular thylakoid membrane. Functionally, produces ATP from ADP in the presence of a proton gradient across the membrane. The gamma chain is believed to be important in regulating ATPase activity and the flow of protons through the CF(0) complex. The chain is ATP synthase gamma chain from Synechococcus sp. (strain CC9311).